The primary structure comprises 214 residues: uncharacterized protein (214 aa).

The signal sequence occupies residues 1-18; it reads MTMYIGLILVVLATFCQG. Asn64 is a glycosylation site (N-linked (GlcNAc...) asparagine; by host).

This is an uncharacterized protein from Magallana gigas (Pacific oyster).